The primary structure comprises 362 residues: Atypical chemokine receptor 3 (362 aa).

At 1–47 the chain is on the extracellular side; the sequence is MDVHLFDYVEPGNYSDINWPCNSSDCIVVDTVQCPAMPNKNVLLYTL. Asn-13 and Asn-22 each carry an N-linked (GlcNAc...) asparagine glycan. A helical membrane pass occupies residues 48 to 68; that stretch reads SFIYIFIFVIGMIANSVVVWV. Topologically, residues 69–81 are cytoplasmic; sequence NIQAKTTGYDTHC. The chain crosses the membrane as a helical span at residues 82–102; that stretch reads YILNLAIADLWVVITIPVWVV. The Extracellular segment spans residues 103–118; sequence SLVQHNQWPMGELTCK. A disulfide bond links Cys-117 and Cys-196. A helical membrane pass occupies residues 119–139; it reads ITHLIFSINLFGSIFFLACMS. Residues 140–162 are Cytoplasmic-facing; sequence VDRYLSITYFTSTSSYKKKMVRR. A helical membrane pass occupies residues 163–183; the sequence is VVCVLVWLLAFFVSLPDTYYL. The Extracellular segment spans residues 184-213; sequence KTVTSASNNETYCRSFYPEHSIKEWLIGME. The chain crosses the membrane as a helical span at residues 214–234; sequence LVSVILGFAVPFTIIAIFYFL. Residues 235-252 are Cytoplasmic-facing; that stretch reads LARAMSASGDQEKHSSRK. A helical membrane pass occupies residues 253-273; the sequence is IIFSYVVVFLVCWLPYHFVVL. The Extracellular portion of the chain corresponds to 274–296; that stretch reads LDIFSILHYIPFTCQLENVLFTA. Residues 297–319 traverse the membrane as a helical segment; that stretch reads LHVTQCLSLVHCCVNPVLYSFIN. Residues 320-362 are Cytoplasmic-facing; that stretch reads RNYRYELMKAFIFKYSAKTGLTKLIDASRVSETEYSALEQNTK. A C-terminal cytoplasmic tail region spans residues 324–362; sequence YELMKAFIFKYSAKTGLTKLIDASRVSETEYSALEQNTK. Phosphoserine is present on residues Ser-347, Ser-350, and Ser-355.

It belongs to the G-protein coupled receptor 1 family. Atypical chemokine receptor subfamily. As to quaternary structure, homodimer. Can form heterodimers with CXCR4; heterodimerization may regulate CXCR4 signaling activity. Interacts with ARRB1 and ARRB2. Post-translationally, the Ser/Thr residues in the C-terminal cytoplasmic tail may be phosphorylated. Ubiquitinated at the Lys residues in its C-terminal cytoplasmic tail and is essential for correct trafficking from and to the cell membrane. Deubiquitinated by CXCL12-stimulation in a reversible manner. In terms of tissue distribution, expressed in vascular smooth muscle cells (at protein level). In brain, expressed in blood vessels, pyramidal cells in hippocampal subfield CA3, mature dentate gyrus granule cells, ventricle walls, olfactory bulb, accumbens shell, supraoptic, lateroanterior and ventromedial hypothalamic nuclei, medial region of thalamus, and motor nuclei, central gray and raphe magnus nucleus of brain stem. Detected in primary neurons, GABAergic neurons, astrocytes, cerebral cortex, ventral striatum and choroid plexus. Not detected in mesencephalon.

Its subcellular location is the cell membrane. The protein resides in the early endosome. The protein localises to the recycling endosome. Its function is as follows. Atypical chemokine receptor that controls chemokine levels and localization via high-affinity chemokine binding that is uncoupled from classic ligand-driven signal transduction cascades, resulting instead in chemokine sequestration, degradation, or transcytosis. Also known as interceptor (internalizing receptor) or chemokine-scavenging receptor or chemokine decoy receptor. Acts as a receptor for chemokines CXCL11 and CXCL12/SDF1. Chemokine binding does not activate G-protein-mediated signal transduction but instead induces beta-arrestin recruitment, leading to ligand internalization and activation of MAPK signaling pathway. Required for regulation of CXCR4 protein levels in migrating interneurons, thereby adapting their chemokine responsiveness. In glioma cells, transduces signals via MEK/ERK pathway, mediating resistance to apoptosis. Promotes cell growth and survival. Not involved in cell migration, adhesion or proliferation of normal hematopoietic progenitors but activated by CXCL11 in malignant hemapoietic cells, leading to phosphorylation of ERK1/2 (MAPK3/MAPK1) and enhanced cell adhesion and migration. Plays a regulatory role in CXCR4-mediated activation of cell surface integrins by CXCL12. Required for heart valve development. Functionally, atypical chemokine receptor that controls chemokine levels and localization via high-affinity chemokine binding that is uncoupled from classic ligand-driven signal transduction cascades, resulting instead in chemokine sequestration, degradation, or transcytosis. Also known as interceptor (internalizing receptor) or chemokine-scavenging receptor or chemokine decoy receptor. Acts as a receptor for chemokines CXCL11 and CXCL12/SDF1. Chemokine binding does not activate G-protein-mediated signal transduction but instead induces beta-arrestin recruitment, leading to ligand internalization and activation of MAPK signaling pathway. Required for regulation of CXCR4 protein levels in migrating interneurons, thereby adapting their chemokine responsiveness. In glioma cells, transduces signals via MEK/ERK pathway, mediating resistance to apoptosis. Promotes cell growth and survival. Not involved in cell migration, adhesion or proliferation of normal hematopoietic progenitors but activated by CXCL11 in malignant hemapoietic cells, leading to phosphorylation of ERK1/2 (MAPK3/MAPK1) and enhanced cell adhesion and migration. Plays a regulatory role in CXCR4-mediated activation of cell surface integrins by CXCL12. Required for heart valve development. Regulates axon guidance in the oculomotor system through the regulation of CXCL12 levels. The chain is Atypical chemokine receptor 3 from Rattus norvegicus (Rat).